Here is a 210-residue protein sequence, read N- to C-terminus: GTP pyrophosphokinase YwaC (210 aa).

Belongs to the RelA/SpoT family. Homotetramer.

It catalyses the reaction GTP + ATP = guanosine 3'-diphosphate 5'-triphosphate + AMP. It functions in the pathway purine metabolism; ppGpp biosynthesis; ppGpp from GTP: step 1/2. In terms of biological role, functions as a (p)ppGpp synthase; GDP can be used instead of GTP, resulting in an increase of (p)ppGpp synthesis. Overexpression in relA mutants (triple relA-yjbM-ywaC deletions and single relA deletions) leads to growth arrest; GTP levels fall drastically, various guanine-related nucleotides are synthesized (ppGp or pGpp), the cellular transcriptional profile changes dramatically and 70S ribosome dimerization occurs. Overexpression in the presence of a wild-type relA gene does not have these effects. In eubacteria ppGpp (guanosine 3'-diphosphate 5'-diphosphate) is a mediator of the stringent response that coordinates a variety of cellular activities in response to changes in nutritional abundance. activities in response to changes in nutritional abundance. YwaC has probably a minor role in stringent response. The protein is GTP pyrophosphokinase YwaC (ywaC) of Bacillus subtilis (strain 168).